The sequence spans 361 residues: MLYSLITQLIDQYSFLNVFKYLTFRTGLSMFTSMFVVLLIGTPFIKFFSARKILNPIRDDGPTEHIVKKIGTPTMGGVLILLGLFSGILLWGDLSNYHIWFLLFIVSGFGLLGAYDDYKKIKFKNSSGVSFKFKIISQILIAIVGIYGLTQLSQNTELTNLYFPFFKNLIINLGWFFIPFSIFIIVGSSNAVNLTDGLDGLATVPVILVAACFAFISYVTGNIVFSEYLNIPYLEGMGEVSVFCGSIIGACLGFLWFNAPPAKIFMGDTGSLALGGSLGAIGIITKHEIVLAITGGLFVLEAVSVIIQVFSFKLTGKRIFRMAPIHHHFEKKGWAESTVVIRFWIISIILAMIGLATLKLR.

A run of 10 helical transmembrane segments spans residues leucine 28–phenylalanine 48, isoleucine 70–leucine 90, leucine 94–alanine 114, valine 129–leucine 149, leucine 169–serine 189, proline 205–phenylalanine 225, methionine 237–phenylalanine 257, isoleucine 264–isoleucine 284, isoleucine 289–valine 309, and threonine 338–leucine 358.

It belongs to the glycosyltransferase 4 family. MraY subfamily. The cofactor is Mg(2+).

Its subcellular location is the cell inner membrane. It carries out the reaction UDP-N-acetyl-alpha-D-muramoyl-L-alanyl-gamma-D-glutamyl-meso-2,6-diaminopimeloyl-D-alanyl-D-alanine + di-trans,octa-cis-undecaprenyl phosphate = di-trans,octa-cis-undecaprenyl diphospho-N-acetyl-alpha-D-muramoyl-L-alanyl-D-glutamyl-meso-2,6-diaminopimeloyl-D-alanyl-D-alanine + UMP. It participates in cell wall biogenesis; peptidoglycan biosynthesis. Catalyzes the initial step of the lipid cycle reactions in the biosynthesis of the cell wall peptidoglycan: transfers peptidoglycan precursor phospho-MurNAc-pentapeptide from UDP-MurNAc-pentapeptide onto the lipid carrier undecaprenyl phosphate, yielding undecaprenyl-pyrophosphoryl-MurNAc-pentapeptide, known as lipid I. The protein is Phospho-N-acetylmuramoyl-pentapeptide-transferase of Pelagibacter ubique (strain HTCC1062).